Here is a 166-residue protein sequence, read N- to C-terminus: NAD(P)H-quinone oxidoreductase subunit I, chloroplastic (166 aa).

4Fe-4S ferredoxin-type domains lie at 55–84 and 95–124; these read GRIH…VDWK and LNYS…MTEE. Residues C64, C67, C70, C74, C104, C107, C110, and C114 each contribute to the [4Fe-4S] cluster site.

This sequence belongs to the complex I 23 kDa subunit family. As to quaternary structure, NDH is composed of at least 16 different subunits, 5 of which are encoded in the nucleus. [4Fe-4S] cluster serves as cofactor.

The protein resides in the plastid. It localises to the chloroplast thylakoid membrane. The enzyme catalyses a plastoquinone + NADH + (n+1) H(+)(in) = a plastoquinol + NAD(+) + n H(+)(out). It carries out the reaction a plastoquinone + NADPH + (n+1) H(+)(in) = a plastoquinol + NADP(+) + n H(+)(out). Its function is as follows. NDH shuttles electrons from NAD(P)H:plastoquinone, via FMN and iron-sulfur (Fe-S) centers, to quinones in the photosynthetic chain and possibly in a chloroplast respiratory chain. The immediate electron acceptor for the enzyme in this species is believed to be plastoquinone. Couples the redox reaction to proton translocation, and thus conserves the redox energy in a proton gradient. This chain is NAD(P)H-quinone oxidoreductase subunit I, chloroplastic, found in Steiractinia sodiroi.